Reading from the N-terminus, the 252-residue chain is uncharacterized protein (252 aa).

A Clp R domain is found at 96-238 (FRRFTPRARN…ITTLASLTGA (143 aa)). Repeat stretches follow at residues 99–164 (FTPR…PAVT) and 172–238 (FSGP…LTGA).

Belongs to the ClpA/ClpB family. ClpC subfamily.

This is an uncharacterized protein from Mycobacterium bovis (strain ATCC BAA-935 / AF2122/97).